The chain runs to 398 residues: HTFVDLKSPFTLSNYLSFSSSKRRQPPSLFTVRASDSDFEAAVVAGKVPEAPPVPPTPASPAGTPVVPSLPIQRRPRRNRRSPALRSAFQETTLSPANFVYPLFIHEGEEDTPIGAMPGCYRLGWRHGLLEEVAKARDVGVNSVVLFPKIPDALKTPTGDEAYNEDGLVPRSIRLLKDKYPDLIIYTDVALDPYSSDGHDGIVREDGVIMNDETVHQLCKQAVAQARAGADVVSPSDMMDGRVGAMRVALDAEGFQHVSIMSYTAKYASSFYGPFREALDSNPRFGDKKTYQMNPANYREALTEMREDESEGADILLVKPGLPYLDIIRLLRDNSPLPIAAYQVSGEYSMIKAGGALKMIDEEKVMMESLLCLRRAGADIILTYFALQAARTLCGEKR.

The tract at residues V48–S87 is disordered. A compositionally biased stretch (pro residues) spans E50–A59. Residues S60–S69 show a composition bias toward low complexity. The span at R74–P83 shows a compositional bias: basic residues. K266 functions as the Schiff-base intermediate with substrate in the catalytic mechanism. Residues R276 and K288 each contribute to the 5-aminolevulinate site. E304 is a binding site for Mg(2+). K319 functions as the Schiff-base intermediate with substrate in the catalytic mechanism. The 5-aminolevulinate site is built by S345 and Y384.

This sequence belongs to the ALAD family. Homooctamer; formed by oligomerization of dimers. Probably also forms lower oligomers. Mg(2+) is required as a cofactor.

The protein resides in the plastid. It is found in the chloroplast. It catalyses the reaction 2 5-aminolevulinate = porphobilinogen + 2 H2O + H(+). The protein operates within porphyrin-containing compound metabolism; protoporphyrin-IX biosynthesis; coproporphyrinogen-III from 5-aminolevulinate: step 1/4. Its activity is regulated as follows. Activated by magnesium. Inhibited by succinyl acetone. Enzyme activity may depend on the oligomerization state, where the fully active octamer may dissociate and reassemble into less active lower oligomers. Functionally, catalyzes an early step in the biosynthesis of tetrapyrroles. Binds two molecules of 5-aminolevulinate per subunit, each at a distinct site, and catalyzes their condensation to form porphobilinogen. The chain is Delta-aminolevulinic acid dehydratase, chloroplastic (HEMB) from Pisum sativum (Garden pea).